The primary structure comprises 1267 residues: DNA-directed RNA polymerase subunit beta (1267 aa).

It belongs to the RNA polymerase beta chain family. The RNAP catalytic core consists of 2 alpha, 1 beta, 1 beta' and 1 omega subunit. When a sigma factor is associated with the core the holoenzyme is formed, which can initiate transcription.

It catalyses the reaction RNA(n) + a ribonucleoside 5'-triphosphate = RNA(n+1) + diphosphate. Its function is as follows. DNA-dependent RNA polymerase catalyzes the transcription of DNA into RNA using the four ribonucleoside triphosphates as substrates. The sequence is that of DNA-directed RNA polymerase subunit beta (rpoB) from Carsonella ruddii (strain PV).